Reading from the N-terminus, the 517-residue chain is Crotonobetaine/carnitine--CoA ligase (517 aa).

It belongs to the ATP-dependent AMP-binding enzyme family.

The enzyme catalyses 4-(trimethylamino)butanoate + ATP + CoA = 4-(trimethylamino)butanoyl-CoA + AMP + diphosphate. It catalyses the reaction crotonobetaine + ATP + CoA = crotonobetainyl-CoA + AMP + diphosphate. It carries out the reaction (R)-carnitine + ATP + CoA = (R)-carnitinyl-CoA + AMP + diphosphate. It participates in amine and polyamine metabolism; carnitine metabolism. In terms of biological role, catalyzes the transfer of CoA to carnitine, generating the initial carnitinyl-CoA needed for the CaiB reaction cycle. Also has activity toward crotonobetaine and gamma-butyrobetaine. This Escherichia fergusonii (strain ATCC 35469 / DSM 13698 / CCUG 18766 / IAM 14443 / JCM 21226 / LMG 7866 / NBRC 102419 / NCTC 12128 / CDC 0568-73) protein is Crotonobetaine/carnitine--CoA ligase.